A 291-amino-acid polypeptide reads, in one-letter code: NAD kinase (291 aa).

The active-site Proton acceptor is aspartate 73. Residues 73–74, 147–148, arginine 175, aspartate 177, 188–193, alanine 212, and glutamine 246 each bind NAD(+); these read DG, ND, and TAYALS.

This sequence belongs to the NAD kinase family. The cofactor is a divalent metal cation.

The protein resides in the cytoplasm. The enzyme catalyses NAD(+) + ATP = ADP + NADP(+) + H(+). Involved in the regulation of the intracellular balance of NAD and NADP, and is a key enzyme in the biosynthesis of NADP. Catalyzes specifically the phosphorylation on 2'-hydroxyl of the adenosine moiety of NAD to yield NADP. The sequence is that of NAD kinase from Polaromonas naphthalenivorans (strain CJ2).